Reading from the N-terminus, the 166-residue chain is Small ribosomal subunit protein uS4 (166 aa).

The S4 RNA-binding domain occupies 102 to 164 (RRLQTIVWRK…HPSCLEVEKE (63 aa)).

This sequence belongs to the universal ribosomal protein uS4 family. In terms of assembly, part of the 30S ribosomal subunit. Contacts protein S5. The interaction surface between S4 and S5 is involved in control of translational fidelity.

One of the primary rRNA binding proteins, it binds directly to 16S rRNA where it nucleates assembly of the body of the 30S subunit. Its function is as follows. With S5 and S12 plays an important role in translational accuracy. This Korarchaeum cryptofilum (strain OPF8) protein is Small ribosomal subunit protein uS4.